Consider the following 292-residue polypeptide: Small ribosomal subunit biogenesis GTPase RsgA (292 aa).

Residues 64-221 enclose the CP-type G domain; sequence RSELFRPAVA…LVDTPGFSSL (158 aa). Residues 113-116 and 164-172 contribute to the GTP site; these read NKMD and GPSGVGKST. Cys245, Cys250, His252, and Cys258 together coordinate Zn(2+).

It belongs to the TRAFAC class YlqF/YawG GTPase family. RsgA subfamily. As to quaternary structure, monomer. Associates with 30S ribosomal subunit, binds 16S rRNA. The cofactor is Zn(2+).

The protein resides in the cytoplasm. Its function is as follows. One of several proteins that assist in the late maturation steps of the functional core of the 30S ribosomal subunit. Helps release RbfA from mature subunits. May play a role in the assembly of ribosomal proteins into the subunit. Circularly permuted GTPase that catalyzes slow GTP hydrolysis, GTPase activity is stimulated by the 30S ribosomal subunit. This Clostridium botulinum (strain Kyoto / Type A2) protein is Small ribosomal subunit biogenesis GTPase RsgA.